Here is a 273-residue protein sequence, read N- to C-terminus: MSATGLTRRNTTSQIEAMKGTRPIVSLTAYTTPIARLLDPHCDLLLVGDSLGMVLYGMESTVGVTLEMMIAHGQGVMRGVQKACVIVDMPFGSYQESKEQAFRNAVRILKETGSDGVKLEGGEEMAETVAFLTARGVPVFGHVGLMPQQVKTAGGYRALGRSEEEADKIRRDAKAIEQAGAFALLVEGTVETLAREITASVGIPTIGIGASPACDGQILVSDDMLGLFSDFKPRFVKHFAQLAPTVSKAVEAYAEEVKARTFPGPEHTFQPKK.

Mg(2+)-binding residues include Asp-49 and Asp-88. Residues 49–50 (DS), Asp-88, and Lys-118 each bind 3-methyl-2-oxobutanoate. Glu-120 contacts Mg(2+). Residue Glu-187 is the Proton acceptor of the active site.

It belongs to the PanB family. In terms of assembly, homodecamer; pentamer of dimers. Mg(2+) is required as a cofactor.

The protein localises to the cytoplasm. The catalysed reaction is 3-methyl-2-oxobutanoate + (6R)-5,10-methylene-5,6,7,8-tetrahydrofolate + H2O = 2-dehydropantoate + (6S)-5,6,7,8-tetrahydrofolate. Its pathway is cofactor biosynthesis; (R)-pantothenate biosynthesis; (R)-pantoate from 3-methyl-2-oxobutanoate: step 1/2. Its function is as follows. Catalyzes the reversible reaction in which hydroxymethyl group from 5,10-methylenetetrahydrofolate is transferred onto alpha-ketoisovalerate to form ketopantoate. This is 3-methyl-2-oxobutanoate hydroxymethyltransferase from Rhizobium rhizogenes (strain K84 / ATCC BAA-868) (Agrobacterium radiobacter).